A 496-amino-acid chain; its full sequence is Probable cytosol aminopeptidase (496 aa).

Lysine 266 and aspartate 271 together coordinate Mn(2+). Residue lysine 278 is part of the active site. Positions 290, 349, and 351 each coordinate Mn(2+). Arginine 353 is a catalytic residue.

Belongs to the peptidase M17 family. The cofactor is Mn(2+).

The protein localises to the cytoplasm. It catalyses the reaction Release of an N-terminal amino acid, Xaa-|-Yaa-, in which Xaa is preferably Leu, but may be other amino acids including Pro although not Arg or Lys, and Yaa may be Pro. Amino acid amides and methyl esters are also readily hydrolyzed, but rates on arylamides are exceedingly low.. The catalysed reaction is Release of an N-terminal amino acid, preferentially leucine, but not glutamic or aspartic acids.. Functionally, presumably involved in the processing and regular turnover of intracellular proteins. Catalyzes the removal of unsubstituted N-terminal amino acids from various peptides. This chain is Probable cytosol aminopeptidase, found in Trichodesmium erythraeum (strain IMS101).